The sequence spans 157 residues: 2-C-methyl-D-erythritol 2,4-cyclodiphosphate synthase (157 aa).

Residues aspartate 8 and histidine 10 each coordinate a divalent metal cation. Residues 8 to 10 and 34 to 35 each bind 4-CDP-2-C-methyl-D-erythritol 2-phosphate; these read DVH and HS. Histidine 42 contacts a divalent metal cation. 4-CDP-2-C-methyl-D-erythritol 2-phosphate contacts are provided by residues 56 to 58, 61 to 65, 100 to 106, 132 to 135, phenylalanine 139, and arginine 142; these read DIG, FPDTD, AQAPKMA, and TTTE.

It belongs to the IspF family. Homotrimer. A divalent metal cation is required as a cofactor.

It carries out the reaction 4-CDP-2-C-methyl-D-erythritol 2-phosphate = 2-C-methyl-D-erythritol 2,4-cyclic diphosphate + CMP. It functions in the pathway isoprenoid biosynthesis; isopentenyl diphosphate biosynthesis via DXP pathway; isopentenyl diphosphate from 1-deoxy-D-xylulose 5-phosphate: step 4/6. Involved in the biosynthesis of isopentenyl diphosphate (IPP) and dimethylallyl diphosphate (DMAPP), two major building blocks of isoprenoid compounds. Catalyzes the conversion of 4-diphosphocytidyl-2-C-methyl-D-erythritol 2-phosphate (CDP-ME2P) to 2-C-methyl-D-erythritol 2,4-cyclodiphosphate (ME-CPP) with a corresponding release of cytidine 5-monophosphate (CMP). The chain is 2-C-methyl-D-erythritol 2,4-cyclodiphosphate synthase from Pseudomonas fluorescens (strain ATCC BAA-477 / NRRL B-23932 / Pf-5).